The chain runs to 213 residues: ATP phosphoribosyltransferase (213 aa).

This sequence belongs to the ATP phosphoribosyltransferase family. Short subfamily. Heteromultimer composed of HisG and HisZ subunits.

Its subcellular location is the cytoplasm. The catalysed reaction is 1-(5-phospho-beta-D-ribosyl)-ATP + diphosphate = 5-phospho-alpha-D-ribose 1-diphosphate + ATP. Its pathway is amino-acid biosynthesis; L-histidine biosynthesis; L-histidine from 5-phospho-alpha-D-ribose 1-diphosphate: step 1/9. Catalyzes the condensation of ATP and 5-phosphoribose 1-diphosphate to form N'-(5'-phosphoribosyl)-ATP (PR-ATP). Has a crucial role in the pathway because the rate of histidine biosynthesis seems to be controlled primarily by regulation of HisG enzymatic activity. The protein is ATP phosphoribosyltransferase of Crocosphaera subtropica (strain ATCC 51142 / BH68) (Cyanothece sp. (strain ATCC 51142)).